The primary structure comprises 725 residues: Homeobox-leucine zipper protein HDG3 (725 aa).

Positions 1–74 (MSQSNMVPVA…PRHKKKKYNR (74 aa)) are disordered. Positions 11–40 (NNGDNNNDNENNNNNNNNGGTDNTNAGNDS) are enriched in low complexity. Polar residues predominate over residues 46-64 (DSGNTSSGNHGEGLGNNQA). Basic residues predominate over residues 65-74 (PRHKKKKYNR). Positions 68-127 (KKKKYNRHTQLQISEMEAFFRECPHPDDKQRYDLSAQLGLDPVQIKFWFQNKRTQNKNQQ) form a DNA-binding region, homeobox. Positions 117-201 (QNKRTQNKNQ…SVTAEKISRL (85 aa)) form a coiled coil. One can recognise an START domain in the interval 243–475 (DANTKPIIME…LVRQCERISS (233 aa)).

The protein belongs to the HD-ZIP homeobox family. Class IV subfamily. Interacts with AIL7/PLT7, ANT, BBM and AIL1. As to expression, expressed in siliques.

It is found in the nucleus. Functionally, probable transcription factor. Seems to promote cell differentiation. In Arabidopsis thaliana (Mouse-ear cress), this protein is Homeobox-leucine zipper protein HDG3.